A 141-amino-acid chain; its full sequence is Flagellar assembly factor FliW (141 aa).

The protein belongs to the FliW family. Interacts with translational regulator CsrA and flagellin(s).

It localises to the cytoplasm. Functionally, acts as an anti-CsrA protein, binds CsrA and prevents it from repressing translation of its target genes, one of which is flagellin. Binds to flagellin and participates in the assembly of the flagellum. This chain is Flagellar assembly factor FliW, found in Clostridium beijerinckii (strain ATCC 51743 / NCIMB 8052) (Clostridium acetobutylicum).